The chain runs to 214 residues: NAD(P)H-quinone oxidoreductase subunit 5, chloroplastic (214 aa).

2 helical membrane passes run 84 to 104 (LFPL…GIPF) and 152 to 172 (SLAI…YSFF).

This sequence belongs to the complex I subunit 5 family. In terms of assembly, NDH is composed of at least 16 different subunits, 5 of which are encoded in the nucleus.

The protein localises to the plastid. It localises to the chloroplast thylakoid membrane. It carries out the reaction a plastoquinone + NADH + (n+1) H(+)(in) = a plastoquinol + NAD(+) + n H(+)(out). It catalyses the reaction a plastoquinone + NADPH + (n+1) H(+)(in) = a plastoquinol + NADP(+) + n H(+)(out). Its function is as follows. NDH shuttles electrons from NAD(P)H:plastoquinone, via FMN and iron-sulfur (Fe-S) centers, to quinones in the photosynthetic chain and possibly in a chloroplast respiratory chain. The immediate electron acceptor for the enzyme in this species is believed to be plastoquinone. Couples the redox reaction to proton translocation, and thus conserves the redox energy in a proton gradient. This chain is NAD(P)H-quinone oxidoreductase subunit 5, chloroplastic (ndhF), found in Brachypodium sylvaticum (False brome).